The sequence spans 447 residues: Large ribosomal subunit protein bL27m (447 aa).

Basic and acidic residues-rich tracts occupy residues 377–402 (QREAKKAREGGAAAEKSEKKEVKAEK) and 409–447 (KVEKPKAPEAAKKESKPKVEEKKAAAAEPKKDSKTEKKD). Residues 377 to 447 (QREAKKAREG…KKDSKTEKKD (71 aa)) form a disordered region.

This sequence belongs to the bacterial ribosomal protein bL27 family. In terms of assembly, component of the mitochondrial large ribosomal subunit (mt-LSU). Mature N.crassa 74S mitochondrial ribosomes consist of a small (37S) and a large (54S) subunit. The 37S small subunit contains a 16S ribosomal RNA (16S mt-rRNA) and 32 different proteins. The 54S large subunit contains a 23S rRNA (23S mt-rRNA) and 42 different proteins.

The protein localises to the mitochondrion. Component of the mitochondrial ribosome (mitoribosome), a dedicated translation machinery responsible for the synthesis of mitochondrial genome-encoded proteins, including at least some of the essential transmembrane subunits of the mitochondrial respiratory chain. The mitoribosomes are attached to the mitochondrial inner membrane and translation products are cotranslationally integrated into the membrane. The protein is Large ribosomal subunit protein bL27m (mrp7) of Neurospora crassa (strain ATCC 24698 / 74-OR23-1A / CBS 708.71 / DSM 1257 / FGSC 987).